A 339-amino-acid chain; its full sequence is D-erythrose-4-phosphate dehydrogenase (339 aa).

Position 11-12 (11-12) interacts with NAD(+); that stretch reads RI. Residues 158–160, arginine 204, 217–218, and arginine 240 contribute to the substrate site; these read SCT and TK. The active-site Nucleophile is cysteine 159. Asparagine 322 is a binding site for NAD(+).

It belongs to the glyceraldehyde-3-phosphate dehydrogenase family. Epd subfamily. Homotetramer.

The protein resides in the cytoplasm. It carries out the reaction D-erythrose 4-phosphate + NAD(+) + H2O = 4-phospho-D-erythronate + NADH + 2 H(+). The protein operates within cofactor biosynthesis; pyridoxine 5'-phosphate biosynthesis; pyridoxine 5'-phosphate from D-erythrose 4-phosphate: step 1/5. In terms of biological role, catalyzes the NAD-dependent conversion of D-erythrose 4-phosphate to 4-phosphoerythronate. The chain is D-erythrose-4-phosphate dehydrogenase from Aliivibrio fischeri (strain ATCC 700601 / ES114) (Vibrio fischeri).